Reading from the N-terminus, the 271-residue chain is 3-methyl-2-oxobutanoate hydroxymethyltransferase (271 aa).

Mg(2+) is bound by residues D51 and D90. 3-methyl-2-oxobutanoate-binding positions include 51 to 52 (DS), D90, and K118. E120 contributes to the Mg(2+) binding site. Residue E186 is the Proton acceptor of the active site.

This sequence belongs to the PanB family. As to quaternary structure, homodecamer; pentamer of dimers. Requires Mg(2+) as cofactor.

The protein resides in the cytoplasm. It carries out the reaction 3-methyl-2-oxobutanoate + (6R)-5,10-methylene-5,6,7,8-tetrahydrofolate + H2O = 2-dehydropantoate + (6S)-5,6,7,8-tetrahydrofolate. It participates in cofactor biosynthesis; (R)-pantothenate biosynthesis; (R)-pantoate from 3-methyl-2-oxobutanoate: step 1/2. In terms of biological role, catalyzes the reversible reaction in which hydroxymethyl group from 5,10-methylenetetrahydrofolate is transferred onto alpha-ketoisovalerate to form ketopantoate. The chain is 3-methyl-2-oxobutanoate hydroxymethyltransferase from Stenotrophomonas maltophilia (strain R551-3).